The following is a 162-amino-acid chain: Solute carrier family 2, facilitated glucose transporter member 4 (162 aa).

The Extracellular segment spans residues 1-13; the sequence is TSIFETAGVGQPA. A helical membrane pass occupies residues 14–34; the sequence is YATIGAGVVNTVFTLVSVFLV. Asn23 is a binding site for D-glucose. Residues 35–43 lie on the Cytoplasmic side of the membrane; it reads ERAGRRTLH. The chain crosses the membrane as a helical span at residues 44–64; sequence LLGLAGMCGCAILMTIALLLL. Topologically, residues 65–75 are extracellular; that stretch reads ERLPAMSYVSI. The helical transmembrane segment at 76-96 threads the bilayer; the sequence is VAIFGFVAFFEIGPGPIPWFI. Glu86 and Trp94 together coordinate D-glucose. Over 97–107 the chain is Cytoplasmic; the sequence is VAELFSQGPRP. A helical transmembrane segment spans residues 108–128; that stretch reads AAMAVAGFCNWTSNFIIGMGF. Residues 129–135 lie on the Extracellular side of the membrane; the sequence is QYIAXAM. A helical membrane pass occupies residues 136 to 156; the sequence is GPYVFLLFAVLLLAFFIFTFL. Topologically, residues 157–162 are cytoplasmic; the sequence is KVPETR.

The protein belongs to the major facilitator superfamily. Sugar transporter (TC 2.A.1.1) family. Glucose transporter subfamily. As to quaternary structure, binds to DAXX. Interacts via its N-terminus with SRFBP1. Interacts with NDUFA9. Interacts with TRARG1; the interaction is required for proper SLC2A4 recycling after insulin stimulation. Sumoylated. In terms of processing, palmitoylated. Palmitoylation by ZDHHC7 controls the insulin-dependent translocation of GLUT4 to the plasma membrane.

It localises to the cell membrane. It is found in the endomembrane system. The protein resides in the cytoplasm. Its subcellular location is the perinuclear region. The catalysed reaction is D-glucose(out) = D-glucose(in). In terms of biological role, insulin-regulated facilitative glucose transporter, which plays a key role in removal of glucose from circulation. Response to insulin is regulated by its intracellular localization: in the absence of insulin, it is efficiently retained intracellularly within storage compartments in muscle and fat cells. Upon insulin stimulation, translocates from these compartments to the cell surface where it transports glucose from the extracellular milieu into the cell. This Canis lupus familiaris (Dog) protein is Solute carrier family 2, facilitated glucose transporter member 4.